A 240-amino-acid chain; its full sequence is Aspartate/glutamate leucyltransferase (240 aa).

This sequence belongs to the R-transferase family. Bpt subfamily.

It localises to the cytoplasm. The enzyme catalyses N-terminal L-glutamyl-[protein] + L-leucyl-tRNA(Leu) = N-terminal L-leucyl-L-glutamyl-[protein] + tRNA(Leu) + H(+). It catalyses the reaction N-terminal L-aspartyl-[protein] + L-leucyl-tRNA(Leu) = N-terminal L-leucyl-L-aspartyl-[protein] + tRNA(Leu) + H(+). Functions in the N-end rule pathway of protein degradation where it conjugates Leu from its aminoacyl-tRNA to the N-termini of proteins containing an N-terminal aspartate or glutamate. The protein is Aspartate/glutamate leucyltransferase of Bordetella avium (strain 197N).